We begin with the raw amino-acid sequence, 213 residues long: Orotidine 5'-phosphate decarboxylase (213 aa).

Substrate-binding positions include Asp-9, Lys-31, 59-68 (DFKVADIPAT), Ser-115, 166-176 (PGVGAQGGKIE), Gly-191, and Arg-192. Lys-61 acts as the Proton donor in catalysis.

The protein belongs to the OMP decarboxylase family. Type 1 subfamily. As to quaternary structure, homodimer.

The catalysed reaction is orotidine 5'-phosphate + H(+) = UMP + CO2. Its pathway is pyrimidine metabolism; UMP biosynthesis via de novo pathway; UMP from orotate: step 2/2. In terms of biological role, catalyzes the decarboxylation of orotidine 5'-monophosphate (OMP) to uridine 5'-monophosphate (UMP). The sequence is that of Orotidine 5'-phosphate decarboxylase from Methanocaldococcus jannaschii (strain ATCC 43067 / DSM 2661 / JAL-1 / JCM 10045 / NBRC 100440) (Methanococcus jannaschii).